The following is a 731-amino-acid chain: 1,4-alpha-glucan branching enzyme GlgB (731 aa).

The active-site Nucleophile is Asp-408. Catalysis depends on Glu-461, which acts as the Proton donor.

The protein belongs to the glycosyl hydrolase 13 family. GlgB subfamily. As to quaternary structure, monomer.

The catalysed reaction is Transfers a segment of a (1-&gt;4)-alpha-D-glucan chain to a primary hydroxy group in a similar glucan chain.. The protein operates within glycan biosynthesis; glycogen biosynthesis. Its function is as follows. Catalyzes the formation of the alpha-1,6-glucosidic linkages in glycogen by scission of a 1,4-alpha-linked oligosaccharide from growing alpha-1,4-glucan chains and the subsequent attachment of the oligosaccharide to the alpha-1,6 position. The sequence is that of 1,4-alpha-glucan branching enzyme GlgB from Corynebacterium efficiens (strain DSM 44549 / YS-314 / AJ 12310 / JCM 11189 / NBRC 100395).